The primary structure comprises 203 residues: Large ribosomal subunit protein bL25 (203 aa).

It belongs to the bacterial ribosomal protein bL25 family. CTC subfamily. Part of the 50S ribosomal subunit; part of the 5S rRNA/L5/L18/L25 subcomplex. Contacts the 5S rRNA. Binds to the 5S rRNA independently of L5 and L18.

Its function is as follows. This is one of the proteins that binds to the 5S RNA in the ribosome where it forms part of the central protuberance. This is Large ribosomal subunit protein bL25 from Cupriavidus metallidurans (strain ATCC 43123 / DSM 2839 / NBRC 102507 / CH34) (Ralstonia metallidurans).